The following is a 133-amino-acid chain: S-adenosylmethionine decarboxylase proenzyme (133 aa).

The active-site Schiff-base intermediate with substrate; via pyruvic acid is Ser-63. At Ser-63 the chain carries Pyruvic acid (Ser); by autocatalysis. The active-site Proton acceptor; for processing activity is His-68. Cys-83 (proton donor; for catalytic activity) is an active-site residue.

Belongs to the prokaryotic AdoMetDC family. Type 1 subfamily. As to quaternary structure, heterotetramer of two alpha and two beta chains arranged as a dimer of alpha/beta heterodimers. It depends on pyruvate as a cofactor. Is synthesized initially as an inactive proenzyme. Formation of the active enzyme involves a self-maturation process in which the active site pyruvoyl group is generated from an internal serine residue via an autocatalytic post-translational modification. Two non-identical subunits are generated from the proenzyme in this reaction, and the pyruvate is formed at the N-terminus of the alpha chain, which is derived from the carboxyl end of the proenzyme. The post-translation cleavage follows an unusual pathway, termed non-hydrolytic serinolysis, in which the side chain hydroxyl group of the serine supplies its oxygen atom to form the C-terminus of the beta chain, while the remainder of the serine residue undergoes an oxidative deamination to produce ammonia and the pyruvoyl group blocking the N-terminus of the alpha chain.

It catalyses the reaction S-adenosyl-L-methionine + H(+) = S-adenosyl 3-(methylsulfanyl)propylamine + CO2. It participates in amine and polyamine biosynthesis; S-adenosylmethioninamine biosynthesis; S-adenosylmethioninamine from S-adenosyl-L-methionine: step 1/1. Catalyzes the decarboxylation of S-adenosylmethionine to S-adenosylmethioninamine (dcAdoMet), the propylamine donor required for the synthesis of the polyamines spermine and spermidine from the diamine putrescine. The polypeptide is S-adenosylmethionine decarboxylase proenzyme (Acidithiobacillus ferrooxidans (strain ATCC 23270 / DSM 14882 / CIP 104768 / NCIMB 8455) (Ferrobacillus ferrooxidans (strain ATCC 23270))).